A 465-amino-acid chain; its full sequence is Iron-sulfur cluster assembly SufBD family protein SE_0610 (465 aa).

This sequence belongs to the iron-sulfur cluster assembly SufBD family.

The sequence is that of Iron-sulfur cluster assembly SufBD family protein SE_0610 from Staphylococcus epidermidis (strain ATCC 12228 / FDA PCI 1200).